Consider the following 301-residue polypeptide: NAD kinase 2 (301 aa).

Asp-77 acts as the Proton acceptor in catalysis. Residues 77–78 (DG), Arg-82, 151–152 (NE), Arg-162, Asp-181, and 192–197 (TAYAFS) each bind NAD(+).

It belongs to the NAD kinase family. Requires a divalent metal cation as cofactor.

It is found in the cytoplasm. It carries out the reaction NAD(+) + ATP = ADP + NADP(+) + H(+). Involved in the regulation of the intracellular balance of NAD and NADP, and is a key enzyme in the biosynthesis of NADP. Catalyzes specifically the phosphorylation on 2'-hydroxyl of the adenosine moiety of NAD to yield NADP. The chain is NAD kinase 2 from Streptomyces avermitilis (strain ATCC 31267 / DSM 46492 / JCM 5070 / NBRC 14893 / NCIMB 12804 / NRRL 8165 / MA-4680).